A 933-amino-acid chain; its full sequence is MFSAIAKRVFGTRNDRALKRLRKRIEAINAHEPELQKLSDEQLQAKTDAFKARLAQGETLDDLLEEAFAVVREASRRVLGLRHFDVQLLGAMVLHDGNISEMKTGEGKTLVATLAVYLNALTGRGVHVVTVNDYLARRDAEWMGRLYRFLGMEVGVVVPRQPREEKVAAYQADITYGTNNEFGFDYLRDNMAFRKEDKVQRDLYYALVDEVDSILIDEARTPLIISGPAEQAGELYEAMSRLVPRLQAQKPEERPEENPELGPGDYYVDEKARQVYLTEGGHDRAEELLREEGLIGENDSLYDARNINVVHHLNAALRAHTLYERDVHYLIRDNQVVIVDEFTGRAMPGRRWSEGLHQAVEAKEGLPIQAENQTLASITFQNYFRLYDKLAGMTGTADTEAFEFQHIYGLEVLSIPTHRPMVRDDAHDLVYRTADEKYEAIIADIRDCVQRDQPVLVGTTSIEASERLSKALKDAGVEHNVLNAKHNESEAQIIADAGRPGTVTIATNMAGRGTDIVLGGNLDQELAELGEDPDPAEVERRKAEWQDRHDRVVNAGGLHVIGTERHESRRIDNQLRGRSGRQGDPGSSRFYLSLEDSLLRIFASERMSGMLEKLGMQHGEAIESGMVSRVIENAQRKVEAHNFDMRKHLLEFDDVANDQRKVVYEQRNELLEADDVAETVDAIRQDVVEKVISEHIPPGSIDEQWDVPGLERTLKEEFGQELPIQRWLDDEDDLHEETLRERIQGEIEKAYRAKEAEAGASVVRHFEKAVMLQVLDKHWKEHLAAMDYLRQGVGLRGYAQRNPKQEFKKDAFAMFQEMLEGLKRDAVGVLLRVQVRAEEDVEAVEEQRRQEAERMQMRHAAPASAAAGAVAAGSGAAGAAAAEGDSAPTGGAQQQSAGGRGQETVAREGPKVGRNESCPCGSGKKYKHCCGKL.

ATP is bound by residues glutamine 87, 105 to 109 (GEGKT), and aspartate 515. 3 disordered regions span residues 567 to 588 (ESRR…PGSS), 840 to 861 (DVEA…RHAA), and 880 to 933 (AAAE…CGKL). A compositionally biased stretch (basic and acidic residues) spans 845–856 (EEQRRQEAERMQ). Residues 880 to 897 (AAAEGDSAPTGGAQQQSA) show a composition bias toward low complexity. Over residues 905-914 (VAREGPKVGR) the composition is skewed to basic and acidic residues. Zn(2+) is bound by residues cysteine 918, cysteine 920, cysteine 929, and cysteine 930. Positions 924–933 (KKYKHCCGKL) are enriched in basic residues.

Belongs to the SecA family. Monomer and homodimer. Part of the essential Sec protein translocation apparatus which comprises SecA, SecYEG and auxiliary proteins SecDF-YajC and YidC. Requires Zn(2+) as cofactor.

It is found in the cell inner membrane. It localises to the cytoplasm. It carries out the reaction ATP + H2O + cellular proteinSide 1 = ADP + phosphate + cellular proteinSide 2.. Its function is as follows. Part of the Sec protein translocase complex. Interacts with the SecYEG preprotein conducting channel. Has a central role in coupling the hydrolysis of ATP to the transfer of proteins into and across the cell membrane, serving both as a receptor for the preprotein-SecB complex and as an ATP-driven molecular motor driving the stepwise translocation of polypeptide chains across the membrane. The polypeptide is Protein translocase subunit SecA (Halorhodospira halophila (strain DSM 244 / SL1) (Ectothiorhodospira halophila (strain DSM 244 / SL1))).